The primary structure comprises 548 residues: Lysine--tRNA ligase (548 aa).

Residues 52–60 (PSGLPHIGT) carry the 'HIGH' region motif. A 'KMSKS' region motif is present at residues 300–304 (KISKS). K303 serves as a coordination point for ATP.

The protein belongs to the class-I aminoacyl-tRNA synthetase family.

The protein resides in the cytoplasm. The catalysed reaction is tRNA(Lys) + L-lysine + ATP = L-lysyl-tRNA(Lys) + AMP + diphosphate. The sequence is that of Lysine--tRNA ligase from Mesorhizobium japonicum (strain LMG 29417 / CECT 9101 / MAFF 303099) (Mesorhizobium loti (strain MAFF 303099)).